Consider the following 806-residue polypeptide: Acetyl-CoA decarbonylase/synthase complex subunit alpha 1 (806 aa).

[4Fe-4S] cluster is bound by residues cysteine 73, cysteine 76, cysteine 77, cysteine 79, cysteine 84, and cysteine 94. Position 117 (histidine 117) interacts with CO. The [Ni-4Fe-4S] cluster site is built by histidine 250, cysteine 278, and cysteine 323. 2 4Fe-4S ferredoxin-type domains span residues 407 to 436 (DEEF…IPEA) and 446 to 475 (SYLE…LNII). Cysteine 417, cysteine 420, cysteine 423, cysteine 427, cysteine 455, cysteine 458, cysteine 461, and cysteine 465 together coordinate [4Fe-4S] cluster. Residues cysteine 523, cysteine 552, and cysteine 587 each coordinate [Ni-4Fe-4S] cluster.

It belongs to the Ni-containing carbon monoxide dehydrogenase family. As to quaternary structure, heterotetramer of two alpha and two epsilon subunits. The ACDS complex is made up of alpha, epsilon, beta, gamma and delta subunits with a probable stoichiometry of (alpha(2)epsilon(2))(4)-beta(8)-(gamma(1)delta(1))(8). The cofactor is [4Fe-4S] cluster. Requires [Ni-4Fe-4S] cluster as cofactor.

The catalysed reaction is CO + 2 oxidized [2Fe-2S]-[ferredoxin] + H2O = 2 reduced [2Fe-2S]-[ferredoxin] + CO2 + 2 H(+). The protein operates within one-carbon metabolism; methanogenesis from acetate. Its function is as follows. Part of the ACDS complex that catalyzes the reversible cleavage of acetyl-CoA, allowing growth on acetate as sole source of carbon and energy. The alpha-epsilon subcomponent functions as a carbon monoxide dehydrogenase. The sequence is that of Acetyl-CoA decarbonylase/synthase complex subunit alpha 1 from Methanosarcina acetivorans (strain ATCC 35395 / DSM 2834 / JCM 12185 / C2A).